The primary structure comprises 579 residues: DELLA protein GAIP (579 aa).

Residues Met-1 to Ser-25 form a disordered region. The short motif at Asp-46–Ala-50 is the DELLA motif element. Residues Val-202–Lys-570 enclose the GRAS domain. Residues Ile-209–Ile-263 form a leucine repeat I (LRI) region. The segment at Gln-281 to Gly-346 is VHIID. The VHIID signature appears at Val-312–Asp-316. Residues Asp-360 to Ser-392 are leucine repeat II (LRII). Residues Val-404–Asn-491 form a PFYRE region. Residues Leu-412–Leu-416 carry the LXXLL motif motif. An SAW region spans residues Ala-494 to Lys-570.

This sequence belongs to the GRAS family. DELLA subfamily. Post-translationally, phosphorylated. Ubiquitinated. Upon GA application it is ubiquitinated, leading to its subsequent degradation.

It localises to the nucleus. Probable transcriptional regulator that acts as a repressor of the gibberellin (GA) signaling pathway. Probably acts by participating in large multiprotein complexes that represses transcription of GA-inducible genes. Upon GA application, it is degraded by the proteasome, allowing the GA signaling pathway. This Cucurbita maxima (Pumpkin) protein is DELLA protein GAIP (GAIP).